A 107-amino-acid polypeptide reads, in one-letter code: uncharacterized protein (107 aa).

This is an uncharacterized protein from Acidianus sp. F28 (AFV-2).